We begin with the raw amino-acid sequence, 103 residues long: Large ribosomal subunit protein bL21 (103 aa).

The protein belongs to the bacterial ribosomal protein bL21 family. As to quaternary structure, part of the 50S ribosomal subunit. Contacts protein L20.

Functionally, this protein binds to 23S rRNA in the presence of protein L20. The polypeptide is Large ribosomal subunit protein bL21 (Thermobifida fusca (strain YX)).